We begin with the raw amino-acid sequence, 543 residues long: Alanine aminotransferase 1, mitochondrial (543 aa).

Residues 1–55 (MRRFVIGQAKNLIDQSRRRQLHHHKNLSFVSLIPPFSAPSDSSSRHLSSSSSSDM) constitute a mitochondrion transit peptide. Positions 43–63 (SSRHLSSSSSSDMSASDSSSS) are enriched in low complexity. Residues 43–64 (SSRHLSSSSSSDMSASDSSSSL) are disordered. S56 bears the N-acetylserine mark. Pyridoxal 5'-phosphate is bound by residues Y173, 209–210 (AS), Y235, N291, Y322, and 354–356 (SFQ). K360 is subject to N6-(pyridoxal phosphate)lysine. Residues R369 and N397 each contribute to the pyridoxal 5'-phosphate site.

It belongs to the class-I pyridoxal-phosphate-dependent aminotransferase family. Alanine aminotransferase subfamily. Homodimer. The cofactor is pyridoxal 5'-phosphate. Post-translationally, the N-terminus is blocked. Mostly expressed in roots and shoots, mostly in vascular tissues, and, to a lower extent, in flowers and leaves.

The protein resides in the mitochondrion. It carries out the reaction L-alanine + 2-oxoglutarate = pyruvate + L-glutamate. It participates in photosynthesis; C4 acid pathway. Its pathway is amino-acid degradation; L-alanine degradation via transaminase pathway; pyruvate from L-alanine: step 1/1. In terms of biological role, is the major alanine aminotransferase in roots that catalyzes the conversion of alanine to pyruvate. Involved in the rapid conversion of alanine to pyruvate during recovery from low-oxygen stress. The chain is Alanine aminotransferase 1, mitochondrial from Arabidopsis thaliana (Mouse-ear cress).